Here is a 62-residue protein sequence, read N- to C-terminus: Photosystem II reaction center protein Z (62 aa).

The next 2 membrane-spanning stretches (helical) occupy residues 8 to 28 and 41 to 61; these read ALAALVALSFLMVIGVPVAYA and FVGSIAWTVLVIAVGVLNFFV.

Belongs to the PsbZ family. As to quaternary structure, PSII is composed of 1 copy each of membrane proteins PsbA, PsbB, PsbC, PsbD, PsbE, PsbF, PsbH, PsbI, PsbJ, PsbK, PsbL, PsbM, PsbT, PsbX, PsbY, PsbZ, Psb30/Ycf12, peripheral proteins PsbO, CyanoQ (PsbQ), PsbU, PsbV and a large number of cofactors. It forms dimeric complexes.

It is found in the cellular thylakoid membrane. Its function is as follows. May control the interaction of photosystem II (PSII) cores with the light-harvesting antenna, regulates electron flow through the 2 photosystem reaction centers. PSII is a light-driven water plastoquinone oxidoreductase, using light energy to abstract electrons from H(2)O, generating a proton gradient subsequently used for ATP formation. This is Photosystem II reaction center protein Z from Picosynechococcus sp. (strain ATCC 27264 / PCC 7002 / PR-6) (Agmenellum quadruplicatum).